The following is a 235-amino-acid chain: Phosphoribosylaminoimidazole-succinocarboxamide synthase (235 aa).

It belongs to the SAICAR synthetase family.

The catalysed reaction is 5-amino-1-(5-phospho-D-ribosyl)imidazole-4-carboxylate + L-aspartate + ATP = (2S)-2-[5-amino-1-(5-phospho-beta-D-ribosyl)imidazole-4-carboxamido]succinate + ADP + phosphate + 2 H(+). The protein operates within purine metabolism; IMP biosynthesis via de novo pathway; 5-amino-1-(5-phospho-D-ribosyl)imidazole-4-carboxamide from 5-amino-1-(5-phospho-D-ribosyl)imidazole-4-carboxylate: step 1/2. This chain is Phosphoribosylaminoimidazole-succinocarboxamide synthase, found in Chloroherpeton thalassium (strain ATCC 35110 / GB-78).